A 337-amino-acid polypeptide reads, in one-letter code: Ketol-acid reductoisomerase (NADP(+)) (337 aa).

The KARI N-terminal Rossmann domain maps to 3–183; the sequence is VEMFYDDDAD…GGTRAGVIKT (181 aa). Residues 26–29, Lys-49, Ser-52, Ser-54, and 84–87 contribute to the NADP(+) site; these read YGSQ and DTAQ. The active site involves His-109. Residue Gly-135 participates in NADP(+) binding. Residues 184–329 enclose the KARI C-terminal knotted domain; that stretch reads TFKEETETDL…KKLRDLMSWV (146 aa). Asp-192, Glu-196, Glu-228, and Glu-232 together coordinate Mg(2+). Ser-253 is a binding site for substrate.

This sequence belongs to the ketol-acid reductoisomerase family. The cofactor is Mg(2+).

The enzyme catalyses (2R)-2,3-dihydroxy-3-methylbutanoate + NADP(+) = (2S)-2-acetolactate + NADPH + H(+). It carries out the reaction (2R,3R)-2,3-dihydroxy-3-methylpentanoate + NADP(+) = (S)-2-ethyl-2-hydroxy-3-oxobutanoate + NADPH + H(+). Its pathway is amino-acid biosynthesis; L-isoleucine biosynthesis; L-isoleucine from 2-oxobutanoate: step 2/4. It functions in the pathway amino-acid biosynthesis; L-valine biosynthesis; L-valine from pyruvate: step 2/4. Involved in the biosynthesis of branched-chain amino acids (BCAA). Catalyzes an alkyl-migration followed by a ketol-acid reduction of (S)-2-acetolactate (S2AL) to yield (R)-2,3-dihydroxy-isovalerate. In the isomerase reaction, S2AL is rearranged via a Mg-dependent methyl migration to produce 3-hydroxy-3-methyl-2-ketobutyrate (HMKB). In the reductase reaction, this 2-ketoacid undergoes a metal-dependent reduction by NADPH to yield (R)-2,3-dihydroxy-isovalerate. This chain is Ketol-acid reductoisomerase (NADP(+)), found in Rhodococcus erythropolis (strain PR4 / NBRC 100887).